The sequence spans 218 residues: uncharacterized protein (218 aa).

This is an uncharacterized protein from Mycoplasma genitalium (strain ATCC 33530 / DSM 19775 / NCTC 10195 / G37) (Mycoplasmoides genitalium).